Reading from the N-terminus, the 275-residue chain is Large ribosomal subunit protein uL2 (275 aa).

The interval 223-275 (AAMNANDHPHGGGEAKAGQGNPHPVTPWGVPTKGYKTRKNKRTQQFIVRDRRG) is disordered.

It belongs to the universal ribosomal protein uL2 family. Part of the 50S ribosomal subunit. Forms a bridge to the 30S subunit in the 70S ribosome.

Functionally, one of the primary rRNA binding proteins. Required for association of the 30S and 50S subunits to form the 70S ribosome, for tRNA binding and peptide bond formation. It has been suggested to have peptidyltransferase activity; this is somewhat controversial. Makes several contacts with the 16S rRNA in the 70S ribosome. The protein is Large ribosomal subunit protein uL2 of Xanthomonas campestris pv. campestris (strain 8004).